We begin with the raw amino-acid sequence, 90 residues long: UPF0297 protein ABC1593 (90 aa).

This sequence belongs to the UPF0297 family.

The sequence is that of UPF0297 protein ABC1593 from Shouchella clausii (strain KSM-K16) (Alkalihalobacillus clausii).